The following is a 156-amino-acid chain: ATP synthase subunit b (156 aa).

Residues 12–32 (VAFLIFVLFCMKYVWPPVITA) traverse the membrane as a helical segment.

It belongs to the ATPase B chain family. In terms of assembly, F-type ATPases have 2 components, F(1) - the catalytic core - and F(0) - the membrane proton channel. F(1) has five subunits: alpha(3), beta(3), gamma(1), delta(1), epsilon(1). F(0) has three main subunits: a(1), b(2) and c(10-14). The alpha and beta chains form an alternating ring which encloses part of the gamma chain. F(1) is attached to F(0) by a central stalk formed by the gamma and epsilon chains, while a peripheral stalk is formed by the delta and b chains.

Its subcellular location is the cell inner membrane. Functionally, f(1)F(0) ATP synthase produces ATP from ADP in the presence of a proton or sodium gradient. F-type ATPases consist of two structural domains, F(1) containing the extramembraneous catalytic core and F(0) containing the membrane proton channel, linked together by a central stalk and a peripheral stalk. During catalysis, ATP synthesis in the catalytic domain of F(1) is coupled via a rotary mechanism of the central stalk subunits to proton translocation. Component of the F(0) channel, it forms part of the peripheral stalk, linking F(1) to F(0). The sequence is that of ATP synthase subunit b from Pseudomonas putida (strain ATCC 700007 / DSM 6899 / JCM 31910 / BCRC 17059 / LMG 24140 / F1).